A 390-amino-acid polypeptide reads, in one-letter code: Centrosomal protein of 44 kDa (390 aa).

Positions 11-195 (RNLEQVLRLL…ISEDTLSPIT (185 aa)) are binds with microtubules and centrioles. The stretch at 233 to 267 (EITALQTMLAECQEKLKELTLIEKRLDCLEQKMKG) forms a coiled coil. The tract at residues 323-347 (KNKVGRPASIPLSSRYSTASSDSTP) is disordered. Ser331 and Ser345 each carry phosphoserine. The span at 335 to 345 (SSRYSTASSDS) shows a compositional bias: low complexity. Thr346 carries the phosphothreonine modification. Positions 361 to 385 (SEETTIQKMERMKKMFEETAELLKC) form a coiled coil.

In terms of assembly, interacts with CROCC. Interacts with POC1B; the interaction is direct and recruits POC1B to centriolar microtubules. Binds to centriolar microtubules.

The protein resides in the cytoplasm. It localises to the cytoskeleton. It is found in the microtubule organizing center. The protein localises to the centrosome. Its subcellular location is the centriole. The protein resides in the spindle pole. It localises to the midbody. Its function is as follows. Centriole-enriched microtubule-binding protein involved in centriole biogenesis. In collaboration with CEP295 and POC1B, is required for the centriole-to-centrosome conversion by ensuring the formation of bona fide centriole wall. Functions as a linker component that maintains centrosome cohesion. Associates with CROCC and regulates its stability and localization to the centrosome. This is Centrosomal protein of 44 kDa (CEP44) from Macaca fascicularis (Crab-eating macaque).